Reading from the N-terminus, the 141-residue chain is Nucleoside diphosphate kinase (141 aa).

ATP is bound by residues Lys11, Phe59, Arg87, Thr93, Arg104, and Asn114. The Pros-phosphohistidine intermediate role is filled by His117.

It belongs to the NDK family. As to quaternary structure, homotetramer. The cofactor is Mg(2+).

Its subcellular location is the cytoplasm. The catalysed reaction is a 2'-deoxyribonucleoside 5'-diphosphate + ATP = a 2'-deoxyribonucleoside 5'-triphosphate + ADP. It catalyses the reaction a ribonucleoside 5'-diphosphate + ATP = a ribonucleoside 5'-triphosphate + ADP. Its function is as follows. Major role in the synthesis of nucleoside triphosphates other than ATP. The ATP gamma phosphate is transferred to the NDP beta phosphate via a ping-pong mechanism, using a phosphorylated active-site intermediate. The chain is Nucleoside diphosphate kinase from Cupriavidus metallidurans (strain ATCC 43123 / DSM 2839 / NBRC 102507 / CH34) (Ralstonia metallidurans).